A 361-amino-acid chain; its full sequence is Septin-2 (361 aa).

Tyr-17 is modified (phosphotyrosine). Residues 34-306 (KGFEFTLMVV…ENFRSERLKR (273 aa)) form the Septin-type G domain. Positions 44 to 51 (GESGLGKS) are G1 motif. GTP-binding positions include 44-51 (GESGLGKS), Thr-78, Gly-104, and 183-191 (KADTLTLKE). Residues 101 to 104 (DTPG) are G3 motif. The tract at residues 182–185 (AKAD) is G4 motif. Residue Lys-190 is modified to N6-acetyllysine. Tyr-211 carries the post-translational modification Phosphotyrosine. Phosphoserine is present on Ser-218. Positions 241 and 256 each coordinate GTP. An important for dimerization region spans residues 260 to 270 (WGVVEVENPEH).

This sequence belongs to the TRAFAC class TrmE-Era-EngA-EngB-Septin-like GTPase superfamily. Septin GTPase family. Septins polymerize into heterooligomeric protein complexes that form filaments, and associate with cellular membranes, actin filaments and microtubules. GTPase activity is required for filament formation. Septin filaments are assembled from asymmetrical heterotrimers, composed of SEPTIN2, SEPTIN6 and SEPTIN7 that associate head-to-head to form a hexameric unit. Interaction between SEPTIN2 and SEPTIN7 seems indirect. Also interacts with SEPTIN9 and SEPTIN5. Interaction with SEPTIN4 not detected. Component of a septin core octameric complex consisting of SEPTIN12, SEPTIN7, SEPTIN6 and SEPTIN2 or SEPTIN4 in the order 12-7-6-2-2-6-7-12 or 12-7-6-4-4-6-7-12 and located in the sperm annulus. Interacts with MAP4. Interacts with DZIP1L.

Its subcellular location is the cytoplasm. The protein localises to the cytoskeleton. The protein resides in the spindle. It is found in the cleavage furrow. It localises to the midbody. Its subcellular location is the cell cortex. The protein localises to the cell projection. The protein resides in the cilium membrane. It is found in the cilium. It localises to the flagellum. In terms of biological role, filament-forming cytoskeletal GTPase. Forms a filamentous structure with SEPTIN12, SEPTIN6, SEPTIN2 and probably SEPTIN4 at the sperm annulus which is required for the structural integrity and motility of the sperm tail during postmeiotic differentiation. Required for normal organization of the actin cytoskeleton. Plays a role in the biogenesis of polarized columnar-shaped epithelium by maintaining polyglutamylated microtubules, thus facilitating efficient vesicle transport, and by impeding MAP4 binding to tubulin. Required for the progression through mitosis. Forms a scaffold at the midplane of the mitotic splindle required to maintain CENPE localization at kinetochores and consequently chromosome congression. During anaphase, may be required for chromosome segregation and spindle elongation. Plays a role in ciliogenesis and collective cell movements. In cilia, required for the integrity of the diffusion barrier at the base of the primary cilium that prevents diffusion of transmembrane proteins between the cilia and plasma membranes: probably acts by regulating the assembly of the tectonic-like complex (also named B9 complex) by localizing TMEM231 protein. This is Septin-2 from Rattus norvegicus (Rat).